The primary structure comprises 351 residues: MPSETLWEIAKAEVEKRGSSENEGDGAEIGEKSVFFIGSKNGGKTTIILRCLDRDEPPKPTLALEYTYGRRTKGHNIPKDIAHFWELGGGTSLLDLISIPITSDTLRTFSIVLVLDLSKPNDLWPTMENLLQATKLNIDKVIMKLGKKNSKAASEMRQKMWSNMQKDHPDRELLDPFPIPLVIIGSKYDIFQDFDSEKRKVICKTLRFVAHYYGASLMFTSKSEALLLKIRGVINQLAFGINKSKSICVDQNKPLFITAGLDSLSQIGPPPLPDNDIGKLHARSPMDLWKKVYEKLFPPKSINTLKDVKDPAKDPQYAESEVDEMRIQKDQELEQYKRSSSKSWKQIELDS.

The tract at residues 304–351 is disordered; it reads TLKDVKDPAKDPQYAESEVDEMRIQKDQELEQYKRSSSKSWKQIELDS. Over residues 323 to 337 the composition is skewed to basic and acidic residues; sequence DEMRIQKDQELEQYK.

The protein belongs to the dynein light intermediate chain family. As to quaternary structure, light intermediate chain of the cytoplasmic dynein complex 2, a multisubunit complex composed at least of eleven different proteins. The cytoplasmic dynein 2 complex consists of two catalytic heavy chains (HCs) and a number of non-catalytic subunits presented by intermediate chains (ICs), light intermediate chains (LICs) and light chains (LCs). Among them, a heavy chain (DYNC2H1), two intermediate chains (DYNC2I2 and DYNC2I1), a light intermediate chain (DYNC2LI1), and a light chain (DYNLT2B) are unique to the dynein-2 complex, but a subset of light chains are also shared by dynein-1 and dynein-2 complexes. Dynein-2 complex is built around two copies of cytoplasmic dynein 2 heavy chain 1 (DYNC2H1). The C-terminal region forms the motor domain, which converts the energy from ATP hydrolysis into movement. Its N-terminal region forms the tail, an extended structure that binds the other subunits and holds the two heavy chains in a homodimer. Interacts with DYNC2H1 (via N-terminus); this interaction stabilizes the dynein-2 complex structure.

The protein resides in the cytoplasm. Its subcellular location is the cell projection. It is found in the cilium. The protein localises to the cytoskeleton. It localises to the cilium basal body. The protein resides in the cilium axoneme. Its subcellular location is the microtubule organizing center. It is found in the centrosome. In terms of biological role, acts as one of several non-catalytic accessory components of the cytoplasmic dynein 2 complex (dynein-2 complex), a motor protein complex that drives the movement of cargos along microtubules within cilia and flagella in concert with the intraflagellar transport (IFT) system, facilitating the assembly of these organelles. Involved in the regulation of ciliary length. The protein is Cytoplasmic dynein 2 light intermediate chain 1 (DYNC2LI1) of Bos taurus (Bovine).